Here is a 247-residue protein sequence, read N- to C-terminus: DNA repair protein RecO (247 aa).

Belongs to the RecO family.

In terms of biological role, involved in DNA repair and RecF pathway recombination. In Caldanaerobacter subterraneus subsp. tengcongensis (strain DSM 15242 / JCM 11007 / NBRC 100824 / MB4) (Thermoanaerobacter tengcongensis), this protein is DNA repair protein RecO.